Here is a 105-residue protein sequence, read N- to C-terminus: Large ribosomal subunit protein uL24 (105 aa).

This sequence belongs to the universal ribosomal protein uL24 family. As to quaternary structure, part of the 50S ribosomal subunit.

One of two assembly initiator proteins, it binds directly to the 5'-end of the 23S rRNA, where it nucleates assembly of the 50S subunit. Functionally, one of the proteins that surrounds the polypeptide exit tunnel on the outside of the subunit. The polypeptide is Large ribosomal subunit protein uL24 (Mycobacterium sp. (strain JLS)).